An 86-amino-acid chain; its full sequence is Small ribosomal subunit protein bS16 (86 aa).

Belongs to the bacterial ribosomal protein bS16 family.

This Xylella fastidiosa (strain 9a5c) protein is Small ribosomal subunit protein bS16.